Consider the following 192-residue polypeptide: Phosphoheptose isomerase (192 aa).

Positions 37 to 192 (LADSFKAGGK…IQLIEKEMVK (156 aa)) constitute an SIS domain. 52–54 (NGG) contacts substrate. Zn(2+) is bound by residues His-61 and Glu-65. Substrate-binding positions include Glu-65, 93 to 94 (ND), 119 to 121 (STS), Ser-124, and Gln-172. Zn(2+)-binding residues include Gln-172 and His-180.

Belongs to the SIS family. GmhA subfamily. In terms of assembly, homotetramer. The cofactor is Zn(2+).

The protein localises to the cytoplasm. It catalyses the reaction 2 D-sedoheptulose 7-phosphate = D-glycero-alpha-D-manno-heptose 7-phosphate + D-glycero-beta-D-manno-heptose 7-phosphate. The protein operates within carbohydrate biosynthesis; D-glycero-D-manno-heptose 7-phosphate biosynthesis; D-glycero-alpha-D-manno-heptose 7-phosphate and D-glycero-beta-D-manno-heptose 7-phosphate from sedoheptulose 7-phosphate: step 1/1. Catalyzes the isomerization of sedoheptulose 7-phosphate in D-glycero-D-manno-heptose 7-phosphate. In Escherichia coli O139:H28 (strain E24377A / ETEC), this protein is Phosphoheptose isomerase.